The sequence spans 189 residues: Shikimate kinase (189 aa).

22 to 27 (ASGKST) contacts ATP. Serine 26 contributes to the Mg(2+) binding site. Positions 44, 68, and 90 each coordinate substrate. Arginine 128 serves as a coordination point for ATP. Residue arginine 147 participates in substrate binding.

It belongs to the shikimate kinase family. Monomer. The cofactor is Mg(2+).

Its subcellular location is the cytoplasm. The catalysed reaction is shikimate + ATP = 3-phosphoshikimate + ADP + H(+). Its pathway is metabolic intermediate biosynthesis; chorismate biosynthesis; chorismate from D-erythrose 4-phosphate and phosphoenolpyruvate: step 5/7. Functionally, catalyzes the specific phosphorylation of the 3-hydroxyl group of shikimic acid using ATP as a cosubstrate. The sequence is that of Shikimate kinase from Synechococcus sp. (strain JA-3-3Ab) (Cyanobacteria bacterium Yellowstone A-Prime).